A 214-amino-acid chain; its full sequence is Protein transport protein SEC22 (214 aa).

Topologically, residues 1–192 (MIKSTLIFRD…QKINFDLLLS (192 aa)) are cytoplasmic. A Longin domain is found at 6 to 117 (LIFRDDGLPL…YAFVSFDNFL (112 aa)). The region spanning 132 to 192 (NLDQLNSDLL…QKINFDLLLS (61 aa)) is the v-SNARE coiled-coil homology domain. Residues 193 to 213 (QYAPVALIGLFFLFLVWWLVF) form a helical; Anchor for type IV membrane protein membrane-spanning segment. Position 214 (Arg-214) is a topological domain, vesicular.

This sequence belongs to the synaptobrevin family.

The protein localises to the membrane. Its subcellular location is the endoplasmic reticulum membrane. It is found in the golgi apparatus membrane. Functionally, required for transport from the ER to the Golgi complex. This Eremothecium gossypii (strain ATCC 10895 / CBS 109.51 / FGSC 9923 / NRRL Y-1056) (Yeast) protein is Protein transport protein SEC22 (SEC22).